The chain runs to 1031 residues: Formin-binding protein 4 (1031 aa).

Disordered stretches follow at residues methionine 1 to proline 102, alanine 116 to threonine 143, and alanine 166 to glycine 205. At serine 19 the chain carries Phosphoserine. 2 stretches are compositionally biased toward low complexity: residues aspartate 41–aspartate 73 and valine 83–asparagine 92. Serine 120, serine 125, and serine 128 each carry phosphoserine. The span at serine 134 to threonine 143 shows a compositional bias: polar residues. A Phosphothreonine modification is found at threonine 176. Residues leucine 190–threonine 203 are compositionally biased toward polar residues. Residues glutamate 218 to tyrosine 252 enclose the WW 1 domain. Position 294 is an N6-acetyllysine (lysine 294). Lysine 305 participates in a covalent cross-link: Glycyl lysine isopeptide (Lys-Gly) (interchain with G-Cter in SUMO1). Lysine 339 participates in a covalent cross-link: Glycyl lysine isopeptide (Lys-Gly) (interchain with G-Cter in SUMO2). Residue lysine 352 forms a Glycyl lysine isopeptide (Lys-Gly) (interchain with G-Cter in SUMO1); alternate linkage. A Glycyl lysine isopeptide (Lys-Gly) (interchain with G-Cter in SUMO2); alternate cross-link involves residue lysine 352. Positions aspartate 355–glutamate 518 are disordered. The span at glutamate 400 to glutamate 414 shows a compositional bias: acidic residues. Residues alanine 418–glutamate 430 show a composition bias toward basic and acidic residues. Phosphoserine occurs at positions 435, 440, 443, 446, and 450. Polar residues predominate over residues valine 436–serine 450. Residues isoleucine 457–methionine 466 are compositionally biased toward basic residues. Positions arginine 469–lysine 482 are enriched in low complexity. 3 positions are modified to phosphoserine: serine 472, serine 507, and serine 516. A compositionally biased stretch (basic and acidic residues) spans aspartate 499–glutamate 518. A Glycyl lysine isopeptide (Lys-Gly) (interchain with G-Cter in SUMO1); alternate cross-link involves residue lysine 527. Lysine 527 participates in a covalent cross-link: Glycyl lysine isopeptide (Lys-Gly) (interchain with G-Cter in SUMO2); alternate. In terms of domain architecture, WW 2 spans asparagine 603–glycine 637. Disordered stretches follow at residues glutamate 629–lysine 681, proline 712–serine 813, and proline 900–glutamate 994. Positions serine 643 to cysteine 663 are enriched in basic and acidic residues. Over residues threonine 664 to glycine 677 the composition is skewed to polar residues. Over residues proline 712–leucine 741 the composition is skewed to pro residues. The span at glutamate 742–glutamate 757 shows a compositional bias: acidic residues. Over residues lysine 771–serine 794 the composition is skewed to polar residues. The segment covering valine 913–proline 939 has biased composition (pro residues). Residues arginine 943–threonine 955 show a composition bias toward basic residues. Residues leucine 971 to arginine 984 show a composition bias toward acidic residues. Serine 977, serine 978, and serine 979 each carry phosphoserine. Basic and acidic residues predominate over residues glutamate 985–glutamate 994.

As to quaternary structure, binds FMN1. Interacts with the Arg/Gly-rich-flanked Pro-rich regions of KHDRBS1/SAM68. Arginine methylation in these regions has no effect on this binding. As to expression, ubiquitous. Highest levels in spleen and thymus.

In Mus musculus (Mouse), this protein is Formin-binding protein 4 (Fnbp4).